The sequence spans 162 residues: Caveolin-2 (162 aa).

Residues 1 to 86 lie on the Cytoplasmic side of the membrane; that stretch reads MGLETEKADV…FEISKYVLYK (86 aa). Tyrosine 19 carries the post-translational modification Phosphotyrosine; by SRC. Phosphoserine is present on residues serine 20 and serine 23. Tyrosine 27 is subject to Phosphotyrosine; by SRC. A Phosphoserine modification is found at serine 36. Residues 87-107 constitute an intramembrane region (helical); the sequence is FLTVFLAIPLAFVAGILFATL. Residues 108 to 162 lie on the Cytoplasmic side of the membrane; sequence SCLHIWIIMPFVKTCLMVLPSVQTIWKSVTDVIIAPLCTSVGRSFSSISLRLSQD.

The protein belongs to the caveolin family. As to quaternary structure, monomer or homodimer. Interacts with CAV1; the interaction forms a stable heterooligomeric complex that is required for targeting to lipid rafts and for caveolae formation. Tyrosine phosphorylated forms do not form heterooligomers with the Tyr-19-phosphorylated form existing as a monomer or dimer, and the Tyr-27-form as a monomer only. Interacts (tyrosine phosphorylated form) with the SH2 domain-containing proteins, RASA1, NCK1 and SRC. Interacts (tyrosine phosphorylated form) with INSR, the interaction (Tyr-27-phosphorylated form) is increased on insulin stimulation. Interacts (Tyr-19 phosphorylated form) with MAPK1 (phosphorylated form); the interaction, promoted by insulin, leads to nuclear location and MAPK1 activation. Interacts with STAT3; the interaction is increased on insulin-induced tyrosine phosphorylation leading to STAT activation. In terms of processing, phosphorylated on serine and tyrosine residues. CAV1 promotes phosphorylation on Ser-23 which then targets the complex to the plasma membrane, lipid rafts and caveolae. Phosphorylation on Ser-36 appears to modulate mitosis in endothelial cells. Phosphorylation on both Tyr-19 and Tyr-27 is required for insulin-induced 'Ser-727' phosphorylation of STAT3 and its activation. Phosphorylation on Tyr-19 is required for insulin-induced phosphorylation of MAPK1 and DNA binding of STAT3. Tyrosine phosphorylation is induced by both EGF and insulin (By. similarity).

It is found in the nucleus. The protein localises to the cytoplasm. It localises to the golgi apparatus membrane. Its subcellular location is the cell membrane. The protein resides in the membrane. It is found in the caveola. Its function is as follows. May act as a scaffolding protein within caveolar membranes. Interacts directly with G-protein alpha subunits and can functionally regulate their activity. Acts as an accessory protein in conjunction with CAV1 in targeting to lipid rafts and driving caveolae formation. The Ser-36 phosphorylated form has a role in modulating mitosis in endothelial cells. Positive regulator of cellular mitogenesis of the MAPK signaling pathway. Required for the insulin-stimulated nuclear translocation and activation of MAPK1 and STAT3, and the subsequent regulation of cell cycle progression. In Otolemur garnettii (Small-eared galago), this protein is Caveolin-2 (CAV2).